The following is a 151-amino-acid chain: Histone H2A.2.1 (151 aa).

Residue M1 is modified to N-acetylmethionine. Disordered regions lie at residues 1-22 and 129-151; these read MDGS…KKSV and EKAE…PKKA. Short sequence motifs (SPKK motif) lie at residues 140 to 143 and 147 to 150; these read SPKK. A compositionally biased stretch (basic residues) spans 140–151; it reads SPKKTTKSPKKA.

The protein belongs to the histone H2A family. As to quaternary structure, the nucleosome is a histone octamer containing two molecules each of H2A, H2B, H3 and H4 assembled in one H3-H4 heterotetramer and two H2A-H2B heterodimers. The octamer wraps approximately 147 bp of DNA. Phosphorylated within its C-terminal part, probably at the SPKK motifs.

Its subcellular location is the nucleus. It is found in the chromosome. Its function is as follows. Core component of nucleosome. Nucleosomes wrap and compact DNA into chromatin, limiting DNA accessibility to the cellular machineries which require DNA as a template. Histones thereby play a central role in transcription regulation, DNA repair, DNA replication and chromosomal stability. DNA accessibility is regulated via a complex set of post-translational modifications of histones, also called histone code, and nucleosome remodeling. In Triticum aestivum (Wheat), this protein is Histone H2A.2.1.